The following is a 588-amino-acid chain: Myc box-dependent-interacting protein 1 (588 aa).

Alanine 2 is modified (N-acetylalanine). The interaction with BIN2 stretch occupies residues 2–122; that stretch reads AEMGSKGVTA…DYHQKLVDQA (121 aa). 2 coiled-coil regions span residues 15-42 and 193-274; these read ASNVQKKLTRAQEKVLQKLGKADETKDE and HLVA…EKQH. The 248-residue stretch at 29 to 276 folds into the BAR domain; it reads VLQKLGKADE…LVSLEKQHGS (248 aa). Residues 279–355 are disordered; the sequence is FTVKAQPSDS…PKHTPSKEMK (77 aa). Phosphoserine occurs at positions 296, 298, and 304. Phosphothreonine is present on threonine 308. Residues serine 324 and serine 332 each carry the phosphoserine modification. The segment at 379–422 is clathrin-binding; sequence FEAPGPFSEQASLLDLDFEPLPPVASPVKAPTPSGQSIPWDLWE. A disordered region spans residues 448–483; the sequence is PSQTAEPGPAQPAEASEVVGGTQEPGETAASEATSS. A compositionally biased stretch (low complexity) spans 474–483; that stretch reads ETAASEATSS. Positions 515 to 588 constitute an SH3 domain; the sequence is GFMFKVQAQH…FPENFTERVQ (74 aa).

In terms of assembly, heterodimer with AMPH. Binds SH3GLB1. Interacts (via SH3 domain) with DNM1. Interacts with SYNJ1. Interacts (via SH3 domain) with DNM2. Interacts with CLTC. Interacts with AP2A2. Interacts with AP2B1. Interacts with MYC (via N-terminal transactivation domain); the interaction requires the integrity of the conserved MYC box regions 1 and 2. Interacts with BIN2. Interacts with SNX4. Interacts (via BAR domain) with BACE1. Binds (via BAR domain) F-actin. Post-translationally, phosphorylated by protein kinase C. As to expression, highly expressed in the brain and muscle. Isoform AMPH2-1 is expressed only in the brain where it is concentrated in axon initial segments and nodes of Ranvier. Isoform AMPH2-2 is widely expressed.

Its subcellular location is the nucleus. It localises to the cytoplasm. The protein localises to the endosome. The protein resides in the cell membrane. It is found in the sarcolemma. Its subcellular location is the T-tubule. Its function is as follows. Is a key player in the control of plasma membrane curvature, and membrane shaping and remodeling. Required in muscle cells for the formation of T-tubules, tubular invaginations of the plasma membrane that function in depolarization-contraction coupling. Required in muscle cells for the formation of T-tubules, tubular invaginations of the plasma membrane that function in depolarization-contraction coupling. Is a negative regulator of endocytosis. Is also involved in the regulation of intracellular vesicles sorting, modulation of BACE1 trafficking and the control of amyloid-beta production. In neuronal circuits, endocytosis regulation may influence the internalization of PHF-tau aggregates. May be involved in the regulation of MYC activity and the control cell proliferation. This Rattus norvegicus (Rat) protein is Myc box-dependent-interacting protein 1 (Bin1).